The chain runs to 152 residues: Superoxide dismutase [Cu-Zn] 1 (152 aa).

The Cu cation site is built by H45, H47, and H62. The cysteines at positions 56 and 145 are disulfide-linked. 4 residues coordinate Zn(2+): H62, H70, H79, and D82. H119 contributes to the Cu cation binding site.

The protein belongs to the Cu-Zn superoxide dismutase family. Homodimer. It depends on Cu cation as a cofactor. Zn(2+) serves as cofactor.

It is found in the cytoplasm. It catalyses the reaction 2 superoxide + 2 H(+) = H2O2 + O2. Destroys radicals which are normally produced within the cells and which are toxic to biological systems. This Mesembryanthemum crystallinum (Common ice plant) protein is Superoxide dismutase [Cu-Zn] 1 (SODCC.1).